Reading from the N-terminus, the 240-residue chain is DNA repair protein RecO (240 aa).

It belongs to the RecO family.

Functionally, involved in DNA repair and RecF pathway recombination. This is DNA repair protein RecO from Xanthomonas oryzae pv. oryzae (strain MAFF 311018).